A 250-amino-acid polypeptide reads, in one-letter code: NADH-quinone oxidoreductase subunit C (250 aa).

2 disordered regions span residues 1–33 (MSDDSSDVKPGPKGPEQPAVEQSPENVPAPTGE) and 228–250 (LGGVPVEYKGGTVPPPDQRRSYN).

This sequence belongs to the complex I 30 kDa subunit family. As to quaternary structure, NDH-1 is composed of 14 different subunits. Subunits NuoB, C, D, E, F, and G constitute the peripheral sector of the complex.

The protein resides in the cell membrane. The catalysed reaction is a quinone + NADH + 5 H(+)(in) = a quinol + NAD(+) + 4 H(+)(out). NDH-1 shuttles electrons from NADH, via FMN and iron-sulfur (Fe-S) centers, to quinones in the respiratory chain. The immediate electron acceptor for the enzyme in this species is believed to be a menaquinone. Couples the redox reaction to proton translocation (for every two electrons transferred, four hydrogen ions are translocated across the cytoplasmic membrane), and thus conserves the redox energy in a proton gradient. The polypeptide is NADH-quinone oxidoreductase subunit C (Nocardioides sp. (strain ATCC BAA-499 / JS614)).